Here is a 381-residue protein sequence, read N- to C-terminus: Pectin lyase 1 (381 aa).

Positions 1–20 (MKYASFIAAAAAALASAVSA) are cleaved as a signal peptide. Intrachain disulfides connect cysteine 83-cysteine 102 and cysteine 92-cysteine 227. N-linked (GlcNAc...) asparagine glycosylation occurs at asparagine 130. Arginine 257 is an active-site residue. Cysteine 324 and cysteine 332 are joined by a disulfide.

Belongs to the polysaccharide lyase 1 family.

It is found in the secreted. It carries out the reaction Eliminative cleavage of (1-&gt;4)-alpha-D-galacturonan methyl ester to give oligosaccharides with 4-deoxy-6-O-methyl-alpha-D-galact-4-enuronosyl groups at their non-reducing ends.. Pectinolytic enzymes consist of four classes of enzymes: pectin lyase, polygalacturonase, pectin methylesterase and rhamnogalacturonase. Among pectinolytic enzymes, pectin lyase is the most important in depolymerization of pectin, since it cleaves internal glycosidic bonds of highly methylated pectins. The protein is Pectin lyase 1 (pel1) of Aspergillus oryzae (strain ATCC 42149 / RIB 40) (Yellow koji mold).